A 317-amino-acid polypeptide reads, in one-letter code: Anamorsin homolog 2 (317 aa).

The tract at residues 1–162 (MAKKVGVLLF…KPSWDSASVF (162 aa)) is N-terminal SAM-like domain. The linker stretch occupies residues 163 to 229 (QLRKGSSQKG…EDDLLTEEDL (67 aa)). Residues Cys240, Cys247, Cys250, and Cys252 each coordinate [2Fe-2S] cluster. A fe-S binding site A region spans residues 240 to 252 (CAPTKKACKNCTC). Residues Cys278, Cys281, Cys289, and Cys292 each coordinate [4Fe-4S] cluster. Short sequence motifs (cx2C motif) lie at residues 278 to 281 (CGSC) and 289 to 292 (CAGC). The interval 278 to 292 (CGSCGLGDAFRCAGC) is fe-S binding site B.

The protein belongs to the anamorsin family. In terms of assembly, monomer. The cofactor is [2Fe-2S] cluster. [4Fe-4S] cluster serves as cofactor.

The protein resides in the cytoplasm. The protein localises to the mitochondrion intermembrane space. Component of the cytosolic iron-sulfur (Fe-S) protein assembly (CIA) machinery. Required for the maturation of extramitochondrial Fe-S proteins. Part of an electron transfer chain functioning in an early step of cytosolic Fe-S biogenesis, facilitating the de novo assembly of a [4Fe-4S] cluster on the cytosolic Fe-S scaffold complex. Electrons are transferred from NADPH via a FAD- and FMN-containing diflavin oxidoreductase. Together with the diflavin oxidoreductase, also required for the assembly of the diferric tyrosyl radical cofactor of ribonucleotide reductase (RNR), probably by providing electrons for reduction during radical cofactor maturation in the catalytic small subunit. This Physcomitrium patens (Spreading-leaved earth moss) protein is Anamorsin homolog 2.